Here is a 526-residue protein sequence, read N- to C-terminus: ATP synthase subunit alpha (526 aa).

Position 171 to 178 (171 to 178 (GDRQTGKT)) interacts with ATP.

Belongs to the ATPase alpha/beta chains family. F-type ATPases have 2 components, CF(1) - the catalytic core - and CF(0) - the membrane proton channel. CF(1) has five subunits: alpha(3), beta(3), gamma(1), delta(1), epsilon(1). CF(0) has four main subunits: a, b, b' and c.

Its subcellular location is the cell inner membrane. The catalysed reaction is ATP + H2O + 4 H(+)(in) = ADP + phosphate + 5 H(+)(out). In terms of biological role, produces ATP from ADP in the presence of a proton gradient across the membrane. The alpha chain is a regulatory subunit. The protein is ATP synthase subunit alpha of Chlorobium limicola (strain DSM 245 / NBRC 103803 / 6330).